A 286-amino-acid polypeptide reads, in one-letter code: tRNA dimethylallyltransferase (286 aa).

The interval 18-21 (DSMQ) is interaction with substrate tRNA.

It belongs to the IPP transferase family. As to quaternary structure, monomer. It depends on Mg(2+) as a cofactor.

The catalysed reaction is adenosine(37) in tRNA + dimethylallyl diphosphate = N(6)-dimethylallyladenosine(37) in tRNA + diphosphate. Its function is as follows. Catalyzes the transfer of a dimethylallyl group onto the adenine at position 37 in tRNAs that read codons beginning with uridine, leading to the formation of N6-(dimethylallyl)adenosine (i(6)A). The sequence is that of tRNA dimethylallyltransferase from Tropheryma whipplei (strain TW08/27) (Whipple's bacillus).